We begin with the raw amino-acid sequence, 527 residues long: Type 2 DNA topoisomerase 6 subunit B (527 aa).

Residues N39, D73, S94–K95, G103–K110, and K421 contribute to the ATP site.

The protein belongs to the TOP6B family. Homodimer. Heterotetramer of two Top6A and two Top6B chains.

The catalysed reaction is ATP-dependent breakage, passage and rejoining of double-stranded DNA.. Relaxes both positive and negative superturns and exhibits a strong decatenase activity. In Pyrobaculum aerophilum (strain ATCC 51768 / DSM 7523 / JCM 9630 / CIP 104966 / NBRC 100827 / IM2), this protein is Type 2 DNA topoisomerase 6 subunit B.